The following is a 667-amino-acid chain: Receptor for retinol uptake STRA6 (667 aa).

Polar residues predominate over residues 1–13; the sequence is MSSQPAGNQTSPG. The disordered stretch occupies residues 1 to 20; that stretch reads MSSQPAGNQTSPGATEDYSY. The Extracellular portion of the chain corresponds to 1-50; sequence MSSQPAGNQTSPGATEDYSYGSWYIDEPQGGEELQPEGEVPSCHTSIPPG. N-linked (GlcNAc...) asparagine glycosylation is present at asparagine 8. Residues 51–71 form a helical membrane-spanning segment; that stretch reads LYHACLASLSILVLLLLAMLV. The Cytoplasmic portion of the chain corresponds to 72–100; it reads RRRQLWPDCVRGRPGLPSPVDFLAGDRPR. The helical transmembrane segment at 101–121 threads the bilayer; the sequence is AVPAAVFMVLLSSLCLLLPDE. The Extracellular portion of the chain corresponds to 122–144; the sequence is DALPFLTLASAPSQDGKTEAPRG. The chain crosses the membrane as a helical span at residues 145–165; that stretch reads AWKILGLFYYAALYYPLAACA. The Cytoplasmic portion of the chain corresponds to 166–168; sequence TAG. The helical transmembrane segment at 169-189 threads the bilayer; the sequence is HTAAHLLGSTLSWAHLGVQVW. Over 190–205 the chain is Extracellular; it reads QRAECPQVPKIYKYYS. A helical transmembrane segment spans residues 206 to 226; that stretch reads LLASLPLLLGLGFLSLWYPVQ. Over 227–295 the chain is Cytoplasmic; that stretch reads LVRSFSRRTG…PQPGFHLPLK (69 aa). The tract at residues 235–293 is interaction with RBP1; sequence TGAGSKGLQSSYSEEYLRNLLCRKKLGSSYHTSKHGFLSWARVCLRHCIYTPQPGFHLP. Residues 296–316 traverse the membrane as a helical segment; it reads LVLSATLTGTAIYQVALLLLV. The Extracellular segment spans residues 317–367; that stretch reads GVVPTIQKVRAGVTTDVSYLLAGFGIVLSEDKQEVVELVKHHLWALEVCYI. The chain crosses the membrane as a helical span at residues 368–388; that stretch reads SALVLSCLLTFLVLMRSLVTH. The Cytoplasmic segment spans residues 389 to 422; it reads RTNLRALHRGAALDLSPLHRSPHPSRQAIFCWMS. A helical transmembrane segment spans residues 423–443; sequence FSAYQTAFICLGLLVQQIIFF. Over 444–473 the chain is Extracellular; it reads LGTTALAFLVLMPVLHGRNLLLFRSLESSW. Residues 474 to 494 form a helical membrane-spanning segment; sequence PFWLTLALAVILQNMAAHWVF. The Cytoplasmic segment spans residues 495–509; sequence LETHDGHPQLTNRRV. Residues 510 to 547 constitute an intramembrane region (helical); sequence LYAATFLLFPLNVLVGAMVATWRVLLSALYNAIHLGQM. Residues 548–667 are Cytoplasmic-facing; that stretch reads DLSLLPPRAA…ALLGANGAQP (120 aa). Residue tyrosine 643 is modified to Phosphotyrosine.

Homodimer. Interacts with JAK2 and STAT5. Interacts (via extracellular domains) with RBP4. Interacts (via cytoplasmic domains) with RBP1. Phosphorylated on tyrosine residues in response to RBP4 binding. Phosphorylation requires the presence of LRAT, suggesting it may be triggered by the uptake of retinol that is then metabolized within the cell to retinoids that function as signaling molecules. As to expression, broad expression. In adult eye expressed in sclera, retina, retinal pigment epithelium, and trabecular meshwork but not in choroid and iris.

The protein localises to the cell membrane. In terms of biological role, functions as a retinol transporter. Accepts all-trans retinol from the extracellular retinol-binding protein RBP4, facilitates retinol transport across the cell membrane, and then transfers retinol to the cytoplasmic retinol-binding protein RBP1. Retinol uptake is enhanced by LRAT, an enzyme that converts retinol to all-trans retinyl esters, the storage forms of vitamin A. Contributes to the activation of a signaling cascade that depends on retinol transport and LRAT-dependent generation of retinol metabolites that then trigger activation of JAK2 and its target STAT5, and ultimately increase the expression of SOCS3 and inhibit cellular responses to insulin. Important for the homeostasis of vitamin A and its derivatives, such as retinoic acid. STRA6-mediated transport is particularly important in the eye, and under conditions of dietary vitamin A deficiency. Does not transport retinoic acid. This chain is Receptor for retinol uptake STRA6 (STRA6), found in Homo sapiens (Human).